We begin with the raw amino-acid sequence, 571 residues long: MSKSRRLFLSMQGDDDFWGNGDRLEEKKLPSIKQEKSKVMDDEDLEDRYYFKQNKLGRQQSESRHENEENKVSQEEKWNLRVPLEESILIKKEEPVPEMEESETIIASEEEQLLETSPSVDTNEEFYNNYRNYFQRRPEVIFLIRSMDENAVENYDKEFIDLYEKTRKSLEVCPNPELNQILRCECSSNTSTANSDNRLPNNHAVVVSNFREPDRRLGRYSKYYYHHNVGPEVYSRKVFVGGLPGCVKESDILNFFSRYGRLQVDWPSKHFGCKSDSDPSVCGDATSSFQQTSHLAMSSPPFGQINPFMSDHSTTSSETQNFGMNRNGNGGGVITHGMVRMMNAARNAGFGGGEPRSVGGESSEEKKQHHLGYVFLLFEKERSVRELVSDCFEEEEGLFITLESSIEPIRVQIRPWLLADAEFLMDFNVPINTKLVAFIGGVPRPLKAVELAHFFEQTYGNVVCVGIDIDNKFKYPRGSGRVAFSNYDAYVQAITDRYIVLDHEDIHKRVEIKPYFFHNQSCEECSSRYNRQYAPFFCPSLECFQYYCEPCWHKMHSHPSRFHHMPVVKGI.

Disordered stretches follow at residues 1-23 (MSKSRRLFLSMQGDDDFWGNGDR) and 51-75 (FKQNKLGRQQSESRHENEENKVSQE). Residues 61–75 (SESRHENEENKVSQE) show a composition bias toward basic and acidic residues. Residues 435–517 (LVAFIGGVPR…KRVEIKPYFF (83 aa)) enclose the RRM domain.

Its function is as follows. Cytoplasmic polyadenylation element binding protein that binds to and regulates the translation of specific mRNAs. In Caenorhabditis remanei (Caenorhabditis vulgaris), this protein is Cytoplasmic polyadenylation element-binding protein 2 (cpb-2).